We begin with the raw amino-acid sequence, 239 residues long: Demethylmenaquinone methyltransferase (239 aa).

S-adenosyl-L-methionine contacts are provided by residues T68, D86, and N111 to G112.

Belongs to the class I-like SAM-binding methyltransferase superfamily. MenG/UbiE family.

The enzyme catalyses a 2-demethylmenaquinol + S-adenosyl-L-methionine = a menaquinol + S-adenosyl-L-homocysteine + H(+). Its pathway is quinol/quinone metabolism; menaquinone biosynthesis; menaquinol from 1,4-dihydroxy-2-naphthoate: step 2/2. In terms of biological role, methyltransferase required for the conversion of demethylmenaquinol (DMKH2) to menaquinol (MKH2). The sequence is that of Demethylmenaquinone methyltransferase from Tropheryma whipplei (strain TW08/27) (Whipple's bacillus).